Reading from the N-terminus, the 950-residue chain is Protocadherin alpha-3 (950 aa).

The first 29 residues, 1 to 29 (MLFSWREDPGAQCLLLSLLLLAASEVGSG), serve as a signal peptide directing secretion. 6 consecutive Cadherin domains span residues 30 to 133 (QLHY…APVF), 134 to 242 (PMAV…APAF), 243 to 350 (ERTI…VPEL), 351 to 455 (VIQS…APAF), 456 to 565 (SQSE…APAL), and 581 to 678 (VPRS…APKA). Residues 30–697 (QLHYSVSEEA…GPEAALVDVN (668 aa)) lie on the Extracellular side of the membrane. Residues Asn-257 and Asn-265 are each glycosylated (N-linked (GlcNAc...) asparagine). Residue Asn-548 is glycosylated (N-linked (GlcNAc...) asparagine). A helical membrane pass occupies residues 698-718 (VYLIVAICAVSSLLVLTLLLY). Residues 719 to 950 (TALRCSAPPT…GNSTTDNSDQ (232 aa)) are Cytoplasmic-facing. PXXP repeat units lie at residues 734 to 737 (PGKP) and 774 to 777 (PSLP). A 6 X 4 AA repeats of P-X-X-P region spans residues 734 to 894 (PGKPTLVCSS…PDKFIIPGSP (161 aa)). Disordered stretches follow at residues 777–806 (PPCPISRDREEKQDVDVDLSAKPRQPNPDW), 831–856 (GPGGPDQQWPTVSSATPEPEAGEVSP), and 869–950 (FKYG…NSDQ). A compositionally biased stretch (basic and acidic residues) spans 782–797 (SRDREEKQDVDVDLSA). PXXP repeat units lie at residues 799–802 (PRQP), 832–835 (PGGP), 873–876 (PGNP), and 891–894 (PGSP). Basic and acidic residues predominate over residues 909–923 (DKSDFITFGKKEETK).

It is found in the cell membrane. In terms of biological role, potential calcium-dependent cell-adhesion protein. May be involved in the establishment and maintenance of specific neuronal connections in the brain. This is Protocadherin alpha-3 (PCDHA3) from Homo sapiens (Human).